The sequence spans 799 residues: Zinc finger X-linked protein ZXDA (799 aa).

The interval 1–89 (MEIPKLLPAR…QPSGGGDDFF (89 aa)) is disordered. A compositionally biased stretch (gly residues) spans 13–26 (LQGGGGGGIPAGGG). 10 C2H2-type zinc fingers span residues 267–291 (YLCPEALCGQTFAKKHQLKMHLLTH), 300–324 (FKCPLGGCGWTFTTSYKLKRHLQSH), 330–354 (FGCPAEGCGKSFTTVYNLKAHMKGH), 360–382 (FKCEVCEESFPTQAKLGAHQRSH), 389–413 (YQCAFSGCKKTFITVSALFSHNRAH), 420–444 (FSCSFPGCSKQYDKACRLKIHLRSH), 450–474 (FLCDFDGCGWNFTSMSKLLRHKRKH), 480–504 (FMCPVEGCGKSFTRAEHLKGHSITH), 510–534 (FVCPVAGCCARFSARSSLYIHSKKH), and 543–568 (SRCPISSCNKLFTSKHSMKTHMVKRH). The interval 267–573 (YLCPEALCGQ…MVKRHKVGQD (307 aa)) is required for interaction with ZXDC. Residues 572–699 (QDLLAQLEAA…NMDEVSSVSV (128 aa)) are required for transcriptional activation.

It belongs to the ZXD family. As to quaternary structure, self-associates. Interacts with ZXDC and CIITA. As to expression, may be expressed in brain, heart, kidney, liver, lung, muscle and placenta.

It is found in the nucleus. Functionally, cooperates with CIITA to promote transcription of MHC class I and MHC class II genes. The sequence is that of Zinc finger X-linked protein ZXDA (ZXDA) from Homo sapiens (Human).